Reading from the N-terminus, the 444-residue chain is Tubulin beta chain (444 aa).

Residues Gln11, Glu69, Ser138, Gly142, Thr143, Gly144, Asn204, and Asn226 each contribute to the GTP site. A Mg(2+)-binding site is contributed by Glu69.

It belongs to the tubulin family. Dimer of alpha and beta chains. A typical microtubule is a hollow water-filled tube with an outer diameter of 25 nm and an inner diameter of 15 nM. Alpha-beta heterodimers associate head-to-tail to form protofilaments running lengthwise along the microtubule wall with the beta-tubulin subunit facing the microtubule plus end conferring a structural polarity. Microtubules usually have 13 protofilaments but different protofilament numbers can be found in some organisms and specialized cells. Mg(2+) serves as cofactor.

The protein localises to the cytoplasm. The protein resides in the cytoskeleton. Functionally, tubulin is the major constituent of microtubules, a cylinder consisting of laterally associated linear protofilaments composed of alpha- and beta-tubulin heterodimers. Microtubules grow by the addition of GTP-tubulin dimers to the microtubule end, where a stabilizing cap forms. Below the cap, tubulin dimers are in GDP-bound state, owing to GTPase activity of alpha-tubulin. This chain is Tubulin beta chain, found in Trichuris trichiura (Whipworm).